The primary structure comprises 233 residues: Orotidine 5'-phosphate decarboxylase (233 aa).

Residues Asp9, Lys31, 58 to 67 (DLKLHDIPNT), Thr120, Arg182, Gln191, Gly211, and Arg212 contribute to the substrate site. The Proton donor role is filled by Lys60.

This sequence belongs to the OMP decarboxylase family. Type 1 subfamily. Homodimer.

It catalyses the reaction orotidine 5'-phosphate + H(+) = UMP + CO2. It functions in the pathway pyrimidine metabolism; UMP biosynthesis via de novo pathway; UMP from orotate: step 2/2. In terms of biological role, catalyzes the decarboxylation of orotidine 5'-monophosphate (OMP) to uridine 5'-monophosphate (UMP). This chain is Orotidine 5'-phosphate decarboxylase, found in Listeria monocytogenes serovar 1/2a (strain ATCC BAA-679 / EGD-e).